A 239-amino-acid chain; its full sequence is Phosducin-like protein 3 (239 aa).

Met1 is subject to N-acetylmethionine. The Phosducin domain occupies 32–180 (EAEEEQRILQ…EGDIKAQFIG (149 aa)). Phosphoserine is present on Ser43. The interval 91 to 239 (FGEVLEISGK…MKRDSDSEGD (149 aa)) is thioredoxin fold. Interaction with XIAP stretches follow at residues 97–99 (ISG) and 153–155 (TCI). Phosphoserine occurs at positions 234 and 236.

Belongs to the phosducin family. As to quaternary structure, interacts (via thioredoxin fold region) with KDR/VEGFR2 (via juxtamembrane domain). Forms ternary complexes with the chaperonin CCT complex and actin substrate, leading to inhibition of actin folding. Interacts with XIAP (via BIR 3 and RING domain). Interacts with HSP90AA1 and HSP90AB1. N-terminal methionine acetylation destabilizes the protein. As to expression, expressed in endothelial cells (at protein level). Expressed in all tissues examined including spleen, thymus, prostate, testis, ovary, small intestine and colon.

The protein resides in the cytoplasm. Its subcellular location is the perinuclear region. The protein localises to the endoplasmic reticulum. Functionally, acts as a chaperone for the angiogenic VEGF receptor KDR/VEGFR2, increasing its abundance by inhibiting its ubiquitination and degradation. Inhibits the folding activity of the chaperonin-containing T-complex (CCT) which leads to inhibition of cytoskeletal actin folding. Acts as a chaperone during heat shock alongside HSP90 and HSP40/70 chaperone complexes. Modulates the activation of caspases during apoptosis. In Homo sapiens (Human), this protein is Phosducin-like protein 3 (PDCL3).